The chain runs to 1025 residues: Leucyl-cystinyl aminopeptidase (1025 aa).

Residue Met-1 is modified to N-acetylmethionine. Topologically, residues Met-1 to Arg-109 are cytoplasmic. The short motif at Leu-53 to Leu-54 is the Dileucine internalization motif element. A Phosphotyrosine modification is found at Tyr-70. Positions Leu-76–Leu-77 match the Dileucine internalization motif motif. A phosphoserine mark is found at Ser-80 and Ser-91. Positions Arg-96–Gly-101 are tankyrase binding. A helical; Signal-anchor for type II membrane protein membrane pass occupies residues Thr-110–Leu-131. Residues Pro-132–Leu-1025 are Extracellular-facing. 5 N-linked (GlcNAc...) asparagine glycosylation sites follow: Asn-145, Asn-184, Asn-215, Asn-256, and Asn-266. Glu-295 contacts substrate. Asn-368 and Asn-374 each carry an N-linked (GlcNAc...) asparagine glycan. Gly-428–Asn-432 is a substrate binding site. A glycan (N-linked (GlcNAc...) asparagine) is linked at Asn-447. His-464 provides a ligand contact to Zn(2+). Glu-465 serves as the catalytic Proton acceptor. Zn(2+) contacts are provided by His-468 and Glu-487. 9 N-linked (GlcNAc...) asparagine glycosylation sites follow: Asn-525, Asn-578, Asn-664, Asn-682, Asn-695, Asn-758, Asn-834, Asn-850, and Asn-989.

The protein belongs to the peptidase M1 family. Homodimer. Binds tankyrases 1 and 2. It depends on Zn(2+) as a cofactor.

It is found in the cell membrane. The protein resides in the endomembrane system. The catalysed reaction is Release of an N-terminal amino acid, Cys-|-Xaa-, in which the half-cystine residue is involved in a disulfide loop, notably in oxytocin or vasopressin. Hydrolysis rates on a range of aminoacyl arylamides exceed that for the cystinyl derivative, however.. Release of an N-terminal amino acid, cleave before cysteine, leucine as well as other amino acids. Degrades peptide hormones such as oxytocin, vasopressin and angiotensin III, and plays a role in maintaining homeostasis during pregnancy. May be involved in the inactivation of neuronal peptides in the brain. Cleaves Met-enkephalin and dynorphin. Binds angiotensin IV and may be the angiotensin IV receptor in the brain. This Mus musculus (Mouse) protein is Leucyl-cystinyl aminopeptidase (Lnpep).